The following is a 307-amino-acid chain: Ribonuclease Z (307 aa).

7 residues coordinate Zn(2+): His63, His65, Asp67, His68, His140, Asp211, and His269. Asp67 serves as the catalytic Proton acceptor.

It belongs to the RNase Z family. As to quaternary structure, homodimer. Zn(2+) is required as a cofactor.

The catalysed reaction is Endonucleolytic cleavage of RNA, removing extra 3' nucleotides from tRNA precursor, generating 3' termini of tRNAs. A 3'-hydroxy group is left at the tRNA terminus and a 5'-phosphoryl group is left at the trailer molecule.. Functionally, zinc phosphodiesterase, which displays some tRNA 3'-processing endonuclease activity. Probably involved in tRNA maturation, by removing a 3'-trailer from precursor tRNA. The sequence is that of Ribonuclease Z from Bacillus licheniformis (strain ATCC 14580 / DSM 13 / JCM 2505 / CCUG 7422 / NBRC 12200 / NCIMB 9375 / NCTC 10341 / NRRL NRS-1264 / Gibson 46).